A 706-amino-acid polypeptide reads, in one-letter code: D-(-)-3-hydroxybutyrate oligomer hydrolase (706 aa).

A signal peptide spans 1–27 (MTIIIAGKNTLTLTSLAAAVLALGACG). Catalysis depends on Ser311, which acts as the Charge relay system.

The protein belongs to the D-(-)-3-hydroxybutyrate oligomer hydrolase family.

The protein localises to the secreted. The enzyme catalyses (3R)-hydroxybutanoate dimer + H2O = 2 (R)-3-hydroxybutanoate + H(+). It functions in the pathway lipid metabolism; butanoate metabolism. Participates in the degradation of poly-3-hydroxybutyrate (PHB). It works downstream of poly(3-hydroxybutyrate) depolymerase, hydrolyzing D(-)-3-hydroxybutyrate oligomers of various length (3HB-oligomers) into 3HB-monomers. This is D-(-)-3-hydroxybutyrate oligomer hydrolase from Polaromonas naphthalenivorans (strain CJ2).